The sequence spans 274 residues: Tryptophan synthase alpha chain (274 aa).

Residues Glu49 and Asp60 each act as proton acceptor in the active site.

Belongs to the TrpA family. As to quaternary structure, tetramer of two alpha and two beta chains.

The enzyme catalyses (1S,2R)-1-C-(indol-3-yl)glycerol 3-phosphate + L-serine = D-glyceraldehyde 3-phosphate + L-tryptophan + H2O. Its pathway is amino-acid biosynthesis; L-tryptophan biosynthesis; L-tryptophan from chorismate: step 5/5. In terms of biological role, the alpha subunit is responsible for the aldol cleavage of indoleglycerol phosphate to indole and glyceraldehyde 3-phosphate. The sequence is that of Tryptophan synthase alpha chain from Gluconacetobacter diazotrophicus (strain ATCC 49037 / DSM 5601 / CCUG 37298 / CIP 103539 / LMG 7603 / PAl5).